The sequence spans 941 residues: Zinc finger protein su(Hw) (941 aa).

Disordered regions lie at residues 1–97 (MSAS…APAA) and 176–211 (ENNNGQEIVVTEDDEDLGEDGDEDGEDSSGKGNSSQ). Residues 47–57 (STTTTTSRTPS) show a composition bias toward low complexity. Residues 185 to 202 (VTEDDEDLGEDGDEDGED) show a composition bias toward acidic residues. Phosphothreonine is present on Thr186. The segment at 220 to 242 (HVCGKCYKTFRRVQSLKKHLEFC) adopts a C2H2-type 1; atypical zinc-finger fold. The C2H2-type 2 zinc-finger motif lies at 290 to 313 (INCPDCPKSFKTQTSYERHIFITH). The segment at 319 to 341 (FPCSICNANLRSEALLALHEEQH) adopts a C2H2-type 3; atypical zinc-finger fold. 9 consecutive C2H2-type zinc fingers follow at residues 348–366 (YACKICGKDFTRSYHLKRH), 380–402 (MSCKVCDRVFYRLDNLRSHLKQH), 413–435 (YMCHTCKNCFYSLSTLNIHIRTH), 441–463 (FDCDLCDKKFSALVALKKHRRYH), 469–491 (YSCTVCNQAFAVKEVLNRHMKRH), 497–519 (HKCDECGKSFIQATQLRTHSKTH), 523–545 (FPCEQCDEKFKTEKQLERHVKTH), 553–577 (FSCAECKRNFRTPALLKEHMDEGKH), and 596–619 (TDCAICDKNFDSSDTLRRHIRTVH). Residues 760–860 (ILTEEDIKLK…PIDDVIEYVL (101 aa)) form an interaction with mod(mdg4) region. The disordered stretch occupies residues 864 to 941 (DQDEGGLDKD…KKPVGEQEKA (78 aa)). 2 stretches are compositionally biased toward basic and acidic residues: residues 869 to 880 (GLDKDNESHSGD) and 891 to 941 (KTNE…QEKA).

In terms of assembly, component of the gypsy chromatin insulator complex, composed of Cp190, mod(mdg4) and su(Hw). The gypsy chromatin insulator complex interacts with Topors via mod(mdg4) and su(Hw). Upon ecdysone stimulation, interacts with Nup98.

Its subcellular location is the nucleus. It is found in the chromosome. Component of the gypsy chromatin insulator complex which is required for the function of the gypsy chromatin insulator and other endogenous chromatin insulators. Chromatin insulators are regulatory elements which establish independent domains of transcriptional activity within eukaryotic genomes. Insulators have two defining properties; they can block the communication between an enhancer and a promoter when placed between them and can also buffer transgenes from position effect variegation (PEV). Insulators are proposed to structure the chromatin fiber into independent domains of differing transcriptional potential by promoting the formation of distinct chromatin loops. This chromatin looping may involve the formation of insulator bodies, where homotypic interactions between individual subunits of the insulator complex could promote the clustering of widely spaced insulators at the nuclear periphery. Within the gypsy insulator complex, this protein binds specifically to a region of the gypsy element located 3' of the 5' long terminal repeat (LTR), and may also mediate interaction with other endogenous insulators at sites distinct from those recognized by Cp190. Cooperates with pita and cliff to recruit Cp190 and regulate insulator function at the front-ultraabdominal (Fub) boundary. This chain is Zinc finger protein su(Hw), found in Drosophila melanogaster (Fruit fly).